The sequence spans 20 residues: Cytochrome c oxidase subunit 5B heart, mitochondrial (20 aa).

The segment at 1-20 (XXLKGIPTDEEQATGLEEYA) is disordered.

Belongs to the cytochrome c oxidase subunit 5B family. Component of the cytochrome c oxidase (complex IV, CIV), a multisubunit enzyme composed of 14 subunits. The complex is composed of a catalytic core of 3 subunits MT-CO1, MT-CO2 and MT-CO3, encoded in the mitochondrial DNA, and 11 supernumerary subunits COX4I, COX5A, COX5B, COX6A, COX6B, COX6C, COX7A, COX7B, COX7C, COX8 and NDUFA4, which are encoded in the nuclear genome. The complex exists as a monomer or a dimer and forms supercomplexes (SCs) in the inner mitochondrial membrane with NADH-ubiquinone oxidoreductase (complex I, CI) and ubiquinol-cytochrome c oxidoreductase (cytochrome b-c1 complex, complex III, CIII), resulting in different assemblies (supercomplex SCI(1)III(2)IV(1) and megacomplex MCI(2)III(2)IV(2)).

Its subcellular location is the mitochondrion inner membrane. The protein operates within energy metabolism; oxidative phosphorylation. In terms of biological role, component of the cytochrome c oxidase, the last enzyme in the mitochondrial electron transport chain which drives oxidative phosphorylation. The respiratory chain contains 3 multisubunit complexes succinate dehydrogenase (complex II, CII), ubiquinol-cytochrome c oxidoreductase (cytochrome b-c1 complex, complex III, CIII) and cytochrome c oxidase (complex IV, CIV), that cooperate to transfer electrons derived from NADH and succinate to molecular oxygen, creating an electrochemical gradient over the inner membrane that drives transmembrane transport and the ATP synthase. Cytochrome c oxidase is the component of the respiratory chain that catalyzes the reduction of oxygen to water. Electrons originating from reduced cytochrome c in the intermembrane space (IMS) are transferred via the dinuclear copper A center (CU(A)) of subunit 2 and heme A of subunit 1 to the active site in subunit 1, a binuclear center (BNC) formed by heme A3 and copper B (CU(B)). The BNC reduces molecular oxygen to 2 water molecules using 4 electrons from cytochrome c in the IMS and 4 protons from the mitochondrial matrix. The sequence is that of Cytochrome c oxidase subunit 5B heart, mitochondrial from Oncorhynchus mykiss (Rainbow trout).